A 131-amino-acid chain; its full sequence is Protein TIFY 5A (131 aa).

An EAR motif is present at residues 9-13 (LELRL). Disordered regions lie at residues 14–44 (FPTS…EESQ) and 74–131 (REMK…HSRR). The span at 16-34 (TSYDSDSSDTTSVVESTSS) shows a compositional bias: low complexity. The 36-residue stretch at 39-74 (PNEESQRITIFYNGKMCFSSDVTHLQARSIISIASR) folds into the Tify domain. Residues 79-100 (KSSSNGSDPPNKSTSFHHNQLP) show a composition bias toward polar residues. Residues 105–127 (SMKKSLQSFLQKRKIRIQATSPY) carry the Jas motif. Residues 106–113 (MKKSLQSF) carry the Nuclear localization signal motif. Over residues 122–131 (QATSPYHSRR) the composition is skewed to polar residues.

It belongs to the TIFY/JAZ family. In terms of assembly, interacts with TPL and weakly with COI1, but not with AFPH2/NINJA. Interacts with MYC2, MYB21, MYB24, TIFY10A/JAZ1, TIFY10B/JAZ2, TIFY6B/JAZ3, TIFY6A/JAZ4, TIFY11A/JAZ5, TIFY11B/JAZ6, TIFY7/JAZ9, TIFY9/JAZ10 and TIFY3B/JAZ12. Interacts with RHD6 and RSL1. As to quaternary structure, (Microbial infection) Interacts with the pathogenic Pseudomonas syringae HopZ1a protein. (Microbial infection) Acetylated by Pseudomonas syringae HopZ1a. In terms of processing, ubiquitinated.

The protein localises to the nucleus. Repressor of jasmonate responses. Unable to associate strongly with COI1 in the presence of jasmonoyl-isoleucine (JA-Ile) and is therefore more resistant to JA-mediated-degradation than other TIFY/JAZ proteins. Repress gene expression through direct recruitment of the corepressor TOPLESS to cognate transcription factors. Interacts with and suppresses RHD6 and RSL1 transcription factor activities to negatively regulate jasmonate-stimulated root hair development. The sequence is that of Protein TIFY 5A from Arabidopsis thaliana (Mouse-ear cress).